A 240-amino-acid chain; its full sequence is Tetrahydromethanopterin S-methyltransferase subunit A (240 aa).

Over 1-218 the chain is Cytoplasmic; sequence MVDKKEPASG…KFHSGVHAGK (218 aa). Histidine 85 contacts 5-hydroxybenzimidazolylcob(I)amide. A helical membrane pass occupies residues 219–239; sequence IEGAMIGLTVTISLLGLLLLG. A topological domain (extracellular) is located at residue arginine 240.

This sequence belongs to the MtrA family. As to quaternary structure, the complex is composed of 8 subunits; MtrA, MtrB, MtrC, MtrD, MtrE, MtrF, MtrG and MtrH. Requires 5-hydroxybenzimidazolylcob(I)amide as cofactor.

Its subcellular location is the cell membrane. The catalysed reaction is 5-methyl-5,6,7,8-tetrahydromethanopterin + coenzyme M + 2 Na(+)(in) = 5,6,7,8-tetrahydromethanopterin + methyl-coenzyme M + 2 Na(+)(out). It participates in one-carbon metabolism; methanogenesis from CO(2); methyl-coenzyme M from 5,10-methylene-5,6,7,8-tetrahydromethanopterin: step 2/2. Its function is as follows. Part of a complex that catalyzes the formation of methyl-coenzyme M and tetrahydromethanopterin from coenzyme M and methyl-tetrahydromethanopterin. This is an energy-conserving, sodium-ion translocating step. This chain is Tetrahydromethanopterin S-methyltransferase subunit A, found in Methanosarcina acetivorans (strain ATCC 35395 / DSM 2834 / JCM 12185 / C2A).